The chain runs to 476 residues: MNFETIIGLEVHVELKTDSKIFSSSPNHFGAEPNTNTSVIDLGYPGVLPVLNKRAVDFAMKAAMALNCQIATDTKFDRKNYFYPDNPKAYQISQFDKPIGEHGWIEIEVGGKKKRIGITRLHLEEDAGKLTHGTDGHSLVDYNRQGTPLVEIVSEPDIRTPEEAYAYLEKLKAIIQYTGVSDCKMEEGSLRCDANISLRPIGQEAFGTKTELKNLNSFNFVRKGLEYEEKRQEQVLLSGGVIEQETRRYDEAGNKTILMRVKEGSDDYRYFPEPDLVNLYIDDNWKERVRSEIPELPDARKDRYVSELGLPAYDAHVLTLTKEMSDFFEETIREGADAKLASNWLMGEVLAYLNAEQKELQESALTPAGLAGMIKLITSGTISSKIAKKVFKELIENGGDPEQIVKDKGLVQISDEGELRKIVAEVLDANAQSIEDYKNGKDRALGFLVGQMMKATKGKANPQLVNKLLLEEMDKR.

It belongs to the GatB/GatE family. GatB subfamily. Heterotrimer of A, B and C subunits.

The enzyme catalyses L-glutamyl-tRNA(Gln) + L-glutamine + ATP + H2O = L-glutaminyl-tRNA(Gln) + L-glutamate + ADP + phosphate + H(+). The catalysed reaction is L-aspartyl-tRNA(Asn) + L-glutamine + ATP + H2O = L-asparaginyl-tRNA(Asn) + L-glutamate + ADP + phosphate + 2 H(+). Allows the formation of correctly charged Asn-tRNA(Asn) or Gln-tRNA(Gln) through the transamidation of misacylated Asp-tRNA(Asn) or Glu-tRNA(Gln) in organisms which lack either or both of asparaginyl-tRNA or glutaminyl-tRNA synthetases. The reaction takes place in the presence of glutamine and ATP through an activated phospho-Asp-tRNA(Asn) or phospho-Glu-tRNA(Gln). The protein is Aspartyl/glutamyl-tRNA(Asn/Gln) amidotransferase subunit B of Shouchella clausii (strain KSM-K16) (Alkalihalobacillus clausii).